Consider the following 395-residue polypeptide: Na(+)/H(+) antiporter NhaA (395 aa).

The next 12 membrane-spanning stretches (helical) occupy residues 18–38 (AGGI…NSPL), 64–84 (LLMW…GLEV), 100–120 (IFPA…YWLV), 129–149 (GGWA…LVLL), 160–180 (FLLA…ALFF), 182–202 (HDLS…LILL), 205–225 (FKVS…VSVL), 226–246 (KSGV…PLKG), 266–286 (FLIL…GLGM), 295–315 (LGVT…FSYL), 333–353 (IFAV…LASL), and 368–388 (LGIL…LFVT).

This sequence belongs to the NhaA Na(+)/H(+) (TC 2.A.33) antiporter family.

The protein resides in the cell inner membrane. It carries out the reaction Na(+)(in) + 2 H(+)(out) = Na(+)(out) + 2 H(+)(in). Its function is as follows. Na(+)/H(+) antiporter that extrudes sodium in exchange for external protons. The protein is Na(+)/H(+) antiporter NhaA of Histophilus somni (strain 129Pt) (Haemophilus somnus).